The primary structure comprises 305 residues: tRNA dimethylallyltransferase (305 aa).

11–18 (GPTAVGKT) is an ATP binding site. Position 13–18 (13–18 (TAVGKT)) interacts with substrate. The segment at 36–39 (DSMQ) is interaction with substrate tRNA.

It belongs to the IPP transferase family. Monomer. Requires Mg(2+) as cofactor.

It carries out the reaction adenosine(37) in tRNA + dimethylallyl diphosphate = N(6)-dimethylallyladenosine(37) in tRNA + diphosphate. Functionally, catalyzes the transfer of a dimethylallyl group onto the adenine at position 37 in tRNAs that read codons beginning with uridine, leading to the formation of N6-(dimethylallyl)adenosine (i(6)A). The chain is tRNA dimethylallyltransferase from Listeria innocua serovar 6a (strain ATCC BAA-680 / CLIP 11262).